Reading from the N-terminus, the 118-residue chain is Mitochondrial protein YPR099C (118 aa).

The protein localises to the mitochondrion. Its function is as follows. Essential for the functional mitochondria and respiratory growth. This chain is Mitochondrial protein YPR099C, found in Saccharomyces cerevisiae (strain ATCC 204508 / S288c) (Baker's yeast).